The following is an 88-amino-acid chain: Beta-insect excitatory toxin 1 (88 aa).

Residues 1–18 form the signal peptide; that stretch reads MKFLLLFLVVLPIMGVFG. Residues 20 to 83 form the LCN-type CS-alpha/beta domain; sequence KNGYAVDSSG…ISDTRKSYCD (64 aa). Intrachain disulfides connect Cys-34–Cys-55, Cys-40–Cys-60, Cys-44–Cys-62, and Cys-56–Cys-82.

This sequence belongs to the long (4 C-C) scorpion toxin superfamily. Sodium channel inhibitor family. Beta subfamily. Expressed by the venom gland.

The protein resides in the secreted. In terms of biological role, excitatory insect beta-toxins induce a spastic paralysis. They bind voltage-independently at site-4 of sodium channels (Nav) and shift the voltage of activation toward more negative potentials thereby affecting sodium channel activation and promoting spontaneous and repetitive firing. This toxin is active only on insects. The chain is Beta-insect excitatory toxin 1 from Androctonus australis (Sahara scorpion).